Reading from the N-terminus, the 197-residue chain is Recombination protein RecR (197 aa).

A C4-type zinc finger spans residues 56–71 (CHVCGNYCESDTCNIC). The region spanning 79-174 (RIICVVEESK…KITKLASGIP (96 aa)) is the Toprim domain.

Belongs to the RecR family.

In terms of biological role, may play a role in DNA repair. It seems to be involved in an RecBC-independent recombinational process of DNA repair. It may act with RecF and RecO. This Fusobacterium nucleatum subsp. nucleatum (strain ATCC 25586 / DSM 15643 / BCRC 10681 / CIP 101130 / JCM 8532 / KCTC 2640 / LMG 13131 / VPI 4355) protein is Recombination protein RecR.